We begin with the raw amino-acid sequence, 96 residues long: Co-chaperonin GroES (96 aa).

It belongs to the GroES chaperonin family. In terms of assembly, heptamer of 7 subunits arranged in a ring. Interacts with the chaperonin GroEL.

The protein resides in the cytoplasm. Its function is as follows. Together with the chaperonin GroEL, plays an essential role in assisting protein folding. The GroEL-GroES system forms a nano-cage that allows encapsulation of the non-native substrate proteins and provides a physical environment optimized to promote and accelerate protein folding. GroES binds to the apical surface of the GroEL ring, thereby capping the opening of the GroEL channel. The protein is Co-chaperonin GroES of Shewanella frigidimarina (strain NCIMB 400).